A 178-amino-acid chain; its full sequence is Caveolin-1 (178 aa).

Ser-2 is modified (N-acetylserine). Residue Ser-2 is modified to Phosphoserine. Residues 2-94 (SGGKYVDSEG…WKASFTTFTV (93 aa)) form a required for homooligomerization region. Residues 2–104 (SGGKYVDSEG…TKYWFYRLLS (103 aa)) lie on the Cytoplasmic side of the membrane. N6-acetyllysine; alternate is present on Lys-5. A Glycyl lysine isopeptide (Lys-Gly) (interchain with G-Cter in ubiquitin); alternate cross-link involves residue Lys-5. Tyr-6 carries the phosphotyrosine modification. A Phosphoserine modification is found at Ser-9. Tyr-14 is modified (phosphotyrosine; by ABL1). Phosphotyrosine is present on Tyr-25. Residues Lys-26 and Lys-30 each participate in a glycyl lysine isopeptide (Lys-Gly) (interchain with G-Cter in ubiquitin) cross-link. At Ser-37 the chain carries Phosphoserine. Residues Lys-39, Lys-47, and Lys-57 each participate in a glycyl lysine isopeptide (Lys-Gly) (interchain with G-Cter in ubiquitin) cross-link. The interaction with CAVIN3 stretch occupies residues 82 to 94 (DGIWKASFTTFTV). Residues 105–125 (ALFGIPMALIWGIYFAILSFL) constitute an intramembrane region (helical). Topologically, residues 126-178 (HIWAVVPCIKSFLIEIQCISRVYSIYIHTVCDPLFEAIGKIFSNVRIGLQKEI) are cytoplasmic. Positions 131–142 (VPCIKSFLIEIQ) are interacts with SPRY1, SPRY2, SPRY3 and SPRY4. Residues Cys-133, Cys-143, and Cys-156 are each lipidated (S-palmitoyl cysteine). The tract at residues 149–160 (SIYIHTVCDPLF) is interacts with SPRY1, SPRY2, and SPRY4. Residues 167 to 178 (FSNVRIGLQKEI) are interacts with SPRY1, SPRY2, SPRY3 and SPRY4.

Belongs to the caveolin family. In terms of assembly, homooligomer. Interacts with GLIPR2. Interacts with NOSTRIN. Interacts with SNAP25 and STX1A. Interacts (via the N-terminus) with DPP4; the interaction is direct. Interacts with CTNNB1, CDH1 and JUP. Interacts with PACSIN2; this interaction induces membrane tubulation. Interacts with SLC7A9. Interacts with BMX and BTK. Interacts with TGFBR1. Interacts with CAVIN3 (via leucine-zipper domain) in a cholesterol-sensitive manner. Interacts with CAVIN1. Interacts with EHD2 in a cholesterol-dependent manner. Forms a ternary complex with UBXN6 and VCP; mediates CAV1 targeting to lysosomes for degradation. Interacts with ABCG1; this interaction regulates ABCG1-mediated cholesterol efflux. Interacts with NEU3; this interaction enhances NEU3 sialidase activity within caveola. Interacts (via C-terminus) with SPRY1, SPRY2 (via C-terminus), SPRY3, and SPRY4. Interacts with IGFBP5; this interaction allows trafficking of IGFBP5 from the plasma membrane to the nucleus. Post-translationally, phosphorylated at Tyr-14 by ABL1 in response to oxidative stress. In terms of processing, ubiquitinated. Undergo monoubiquitination and multi- and/or polyubiquitination. Monoubiquitination of N-terminal lysines promotes integration in a ternary complex with UBXN6 and VCP which promotes oligomeric CAV1 targeting to lysosomes for degradation. Ubiquitinated by ZNRF1; leading to degradation and modulation of the TLR4-mediated immune response.

Its subcellular location is the golgi apparatus membrane. The protein localises to the cell membrane. It is found in the membrane. It localises to the caveola. The protein resides in the membrane raft. May act as a scaffolding protein within caveolar membranes. Forms a stable heterooligomeric complex with CAV2 that targets to lipid rafts and drives caveolae formation. Mediates the recruitment of CAVIN proteins (CAVIN1/2/3/4) to the caveolae. Interacts directly with G-protein alpha subunits and can functionally regulate their activity. Involved in the costimulatory signal essential for T-cell receptor (TCR)-mediated T-cell activation. Its binding to DPP4 induces T-cell proliferation and NF-kappa-B activation in a T-cell receptor/CD3-dependent manner. Recruits CTNNB1 to caveolar membranes and may regulate CTNNB1-mediated signaling through the Wnt pathway. Negatively regulates TGFB1-mediated activation of SMAD2/3 by mediating the internalization of TGFBR1 from membrane rafts leading to its subsequent degradation. Binds 20(S)-hydroxycholesterol (20(S)-OHC). This chain is Caveolin-1 (CAV1), found in Saimiri boliviensis boliviensis (Bolivian squirrel monkey).